The sequence spans 1042 residues: Isoleucine--tRNA ligase (1042 aa).

Positions 59–69 (PFANGLPHYGH) match the 'HIGH' region motif. The short motif at 619-623 (KMSKS) is the 'KMSKS' region element. Position 622 (K622) interacts with ATP.

The protein belongs to the class-I aminoacyl-tRNA synthetase family. IleS type 2 subfamily. In terms of assembly, monomer. Zn(2+) serves as cofactor.

It is found in the cytoplasm. It carries out the reaction tRNA(Ile) + L-isoleucine + ATP = L-isoleucyl-tRNA(Ile) + AMP + diphosphate. Catalyzes the attachment of isoleucine to tRNA(Ile). As IleRS can inadvertently accommodate and process structurally similar amino acids such as valine, to avoid such errors it has two additional distinct tRNA(Ile)-dependent editing activities. One activity is designated as 'pretransfer' editing and involves the hydrolysis of activated Val-AMP. The other activity is designated 'posttransfer' editing and involves deacylation of mischarged Val-tRNA(Ile). The chain is Isoleucine--tRNA ligase from Nocardia farcinica (strain IFM 10152).